The following is a 251-amino-acid chain: E3 ubiquitin-protein ligase Os06g0535400 (251 aa).

3 helical membrane-spanning segments follow: residues 28–48 (VVAA…YCFA), 102–122 (LANR…IVVF), and 127–147 (ADVV…VWLS). The RING-type; atypical zinc finger occupies 185–227 (CCVCLAGMREAQALRDLPRCGHRFHAKCIGKWLTAHPTCPVCR).

Its subcellular location is the membrane. It carries out the reaction S-ubiquitinyl-[E2 ubiquitin-conjugating enzyme]-L-cysteine + [acceptor protein]-L-lysine = [E2 ubiquitin-conjugating enzyme]-L-cysteine + N(6)-ubiquitinyl-[acceptor protein]-L-lysine.. It participates in protein modification; protein ubiquitination. Possesses E3 ubiquitin-protein ligase in vitro. In Oryza sativa subsp. japonica (Rice), this protein is E3 ubiquitin-protein ligase Os06g0535400.